Consider the following 360-residue polypeptide: MDPEETSVYLDYYYATSPNPDIRETHSHVPYTSVFLPVFYIAVFLTGVLGNLVLMGALHFKPGSRRLIDIFIINLAASDFIFLVTLPLWVDKEASLGLWRTGSFLCKGSSYMISVNMHCSVFLLTCMSVDRYLAIVCPVVSRKFRRTDCAYVVCASIWFISCLLGLPTLLSRELTLIDDKPYCAEKKATPLKLIWSLVALIFTFFVPLLSIVTCYCRIARKLCAHYQQSGKHNKKLKKSIKIIFIVVAAFLVSWLPFNTSKLLAIVSGLQQERYFPSAILQLGMEVSGPLAFANSCVNPFIYYIFDSYIRRAIVHCLCPCLKNYDFGSSTETSDSHLTKALSTFIHAEDFTRRRKRSVSL.

At 1–33 (MDPEETSVYLDYYYATSPNPDIRETHSHVPYTS) the chain is on the extracellular side. The helical transmembrane segment at 34-54 (VFLPVFYIAVFLTGVLGNLVL) threads the bilayer. At 55–69 (MGALHFKPGSRRLID) the chain is on the cytoplasmic side. Residues 70-90 (IFIINLAASDFIFLVTLPLWV) form a helical membrane-spanning segment. Residues 91–120 (DKEASLGLWRTGSFLCKGSSYMISVNMHCS) lie on the Extracellular side of the membrane. Residues 121–141 (VFLLTCMSVDRYLAIVCPVVS) traverse the membrane as a helical segment. The Cytoplasmic portion of the chain corresponds to 142–149 (RKFRRTDC). A helical membrane pass occupies residues 150-170 (AYVVCASIWFISCLLGLPTLL). At 171–192 (SRELTLIDDKPYCAEKKATPLK) the chain is on the extracellular side. The chain crosses the membrane as a helical span at residues 193 to 213 (LIWSLVALIFTFFVPLLSIVT). Residues 214–239 (CYCRIARKLCAHYQQSGKHNKKLKKS) lie on the Cytoplasmic side of the membrane. Residues 240 to 260 (IKIIFIVVAAFLVSWLPFNTS) traverse the membrane as a helical segment. The Extracellular portion of the chain corresponds to 261–284 (KLLAIVSGLQQERYFPSAILQLGM). Residues 285-305 (EVSGPLAFANSCVNPFIYYIF) traverse the membrane as a helical segment. Residues 306–360 (DSYIRRAIVHCLCPCLKNYDFGSSTETSDSHLTKALSTFIHAEDFTRRRKRSVSL) are Cytoplasmic-facing. S359 bears the Phosphoserine mark.

This sequence belongs to the G-protein coupled receptor 1 family. Interacts with adapter YWHAE; this interaction promotes ER-to-Golgi transport of GPR15. Phosphorylation is necessary for YWHAE binding and efficient surface expression. Post-translationally, O-glycosylated. Sialylated O-glycans in the N-terminal tail inhibits binding of GPR15LG. In terms of processing, sulfation is required for efficient binding of GPR15LG.

Its subcellular location is the cell membrane. In terms of biological role, g protein-coupled receptor that plays an important role in immune homeostasis. Acts via its natural ligand GPR15LG, a chemokine-like polypeptide strongly expressed in gastrointestinal tissues. GPR15-GPR15LG signaling axis regulates intestinal homeostasis and inflammation through the migration of immune cells. Controls thereby the specific homing of T-cells, particularly FOXP3+ regulatory T-cells (Tregs), to the large intestine lamina propria. Also required for skin localization of thymus-derived dendritic epidermal T-cells. Plays an important role in mediating cytoprotective function as well as angiogenesis of thrombomodulin. Mechanistically, preferentially signals through the Gi/o pathway to inhibit adenylate cyclase activity and activate a phosphatidylinositol-calcium second messenger system that regulates the release of Ca(2+) ions from intracellular stores. The polypeptide is G-protein coupled receptor 15 (GPR15) (Chlorocebus aethiops (Green monkey)).